Here is a 126-residue protein sequence, read N- to C-terminus: MRHRKSGRQLNRNSSHRKAMFSNMACSLVRHEIIKTTVPKAKELRRVVEPLITLAKTDSVANRRLAFARTRDNEVVAKLFTELGPRFAQRAGGYTRILKCGFRTGDKAPMAYIELVDRPEVEAAAE.

It belongs to the bacterial ribosomal protein bL17 family. Part of the 50S ribosomal subunit. Contacts protein L32.

The chain is Large ribosomal subunit protein bL17 from Aliivibrio salmonicida (strain LFI1238) (Vibrio salmonicida (strain LFI1238)).